The primary structure comprises 450 residues: C4-dicarboxylate transport protein (450 aa).

8 helical membrane-spanning segments follow: residues 25–45 (VVFA…YGAA), 56–76 (LIKM…IASM), 90–110 (MAYF…VANV), 162–182 (ILQV…VGDA), 200–220 (LVNI…AFTI), 234–254 (LVLT…GAVA), 319–339 (IYMT…LTLG), and 367–387 (AATL…ILGV).

This sequence belongs to the dicarboxylate/amino acid:cation symporter (DAACS) (TC 2.A.23) family.

Its subcellular location is the cell inner membrane. In terms of biological role, responsible for the transport of dicarboxylates such as succinate, fumarate, and malate from the periplasm across the membrane. The polypeptide is C4-dicarboxylate transport protein (Acidovorax sp. (strain JS42)).